The chain runs to 838 residues: Probable beta-glucosidase I (838 aa).

A glycan (N-linked (GlcNAc...) asparagine) is linked at N197. D225 is a catalytic residue. Positions 395-555 constitute a PA14 domain; that stretch reads DGKKGFKFRV…SQEELISKAA (161 aa). Residue N493 is glycosylated (N-linked (GlcNAc...) asparagine).

This sequence belongs to the glycosyl hydrolase 3 family.

Its subcellular location is the secreted. The enzyme catalyses Hydrolysis of terminal, non-reducing beta-D-glucosyl residues with release of beta-D-glucose.. It functions in the pathway glycan metabolism; cellulose degradation. Beta-glucosidases are one of a number of cellulolytic enzymes involved in the degradation of cellulosic biomass. Catalyzes the last step releasing glucose from the inhibitory cellobiose. The protein is Probable beta-glucosidase I (bglI) of Aspergillus fumigatus (strain ATCC MYA-4609 / CBS 101355 / FGSC A1100 / Af293) (Neosartorya fumigata).